The primary structure comprises 458 residues: Divalent metal cation transporter MntH (458 aa).

Helical transmembrane passes span 38 to 58 (GFWK…VGYM), 76 to 96 (SLLS…AMAA), 119 to 139 (GGFL…AEII), 151 to 171 (MPLI…LLLM), 180 to 200 (AVVA…VILA), 223 to 243 (MLYL…LFLG), 275 to 295 (LTMA…LFFG), 315 to 335 (IVGA…LLAS), 370 to 390 (LMSV…EAKI), 393 to 413 (LLTF…IPLV), and 437 to 457 (FISG…LGFV).

The protein belongs to the NRAMP family.

It is found in the cell membrane. Its function is as follows. H(+)-stimulated, divalent metal cation uptake system. This Lacticaseibacillus paracasei (strain ATCC 334 / BCRC 17002 / CCUG 31169 / CIP 107868 / KCTC 3260 / NRRL B-441) (Lactobacillus paracasei) protein is Divalent metal cation transporter MntH.